The sequence spans 842 residues: 9-beta-pimara-7,15-diene synthase, chloroplastic (842 aa).

Residues 1–56 constitute a chloroplast transit peptide; the sequence is MASPMEAVARSSLVLAPRRRRALGLLPAAAAAAPFVLDCRRRHNGGMRRPHVSFAC. Aspartate 591, aspartate 595, asparagine 735, serine 739, and glutamate 743 together coordinate Mg(2+). A DDXXD motif motif is present at residues 591-595; it reads DDFFD.

This sequence belongs to the terpene synthase family. Mg(2+) serves as cofactor. As to expression, expressed in roots.

The protein resides in the plastid. It localises to the chloroplast. The catalysed reaction is 9alpha-copalyl diphosphate = 9beta-pimara-7,15-diene + diphosphate. Functionally, involved in the biosynthesis of momilactone A and B phytoalexins. Catalyzes the conversion of syn-copalyl diphosphate to the phytoalexin precursor syn-pimara-7,15-diene. This chain is 9-beta-pimara-7,15-diene synthase, chloroplastic, found in Oryza sativa subsp. japonica (Rice).